The sequence spans 231 residues: UPF0749 protein YlxW (231 aa).

Positions methionine 1–alanine 34 are cleaved as a signal peptide. Residues tyrosine 44–lysine 94 adopt a coiled-coil conformation.

Belongs to the UPF0749 family.

Its function is as follows. May be involved in cell division and sporulation. This is UPF0749 protein YlxW (ylxW) from Bacillus subtilis (strain 168).